The chain runs to 298 residues: Enoyl-CoA hydratase AFT6-1 (298 aa).

Residues 1 to 39 form a disordered region; that stretch reads MTYSTTKSVAMNPDEDAPPSDINSSGRLMSHSEVEPRGN.

Belongs to the enoyl-CoA hydratase/isomerase family.

The catalysed reaction is a (3S)-3-hydroxyacyl-CoA = a (2E)-enoyl-CoA + H2O. It carries out the reaction a 4-saturated-(3S)-3-hydroxyacyl-CoA = a (3E)-enoyl-CoA + H2O. The protein operates within mycotoxin biosynthesis. Functionally, enoyl-CoA hydratase; part of the gene clusters that mediate the biosynthesis of the host-selective toxins (HSTs) AF-toxins responsible for Alternaria black spot of strawberry disease by the strawberry pathotype. AF-toxin I and III are valine derivatives of 2,3-dyhydroxy-isovaleric acid and 2-hydroxy-isovaleric acid respectively, while AF II is an isoleucine derivative of 2-hydroxy-valeric acid. These derivatives are bound to a 9,10-epoxy-8-hydroxy-9-methyl-decatrienoic acid (EDA) moiety. On cellular level, AF-toxin affects plasma membrane of susceptible cells and cause a sudden increase in loss of K(+) after a few minutes of toxin treatment. The aldo-keto reductase AFTS1 catalyzes the conversion of 2-keto-isovaleric acid (2-KIV) to 2-hydroxy-isovaleric acid (2-HIV) by reduction of its ketone to an alcohol. The acyl-CoA ligase AFT1, the hydrolase AFT2 and the enoyl-CoA hydratases AFT3 and AFT6, but also the polyketide synthase AFT9, the acyl-CoA dehydrogenase AFT10, the cytochrome P450 monooxygenase AFT11 and the oxidoreductase AFT12 are all involved in the biosynthesis of the AK-, AF- and ACT-toxin common EDA structural moiety. The exact function of each enzyme, and of additional enzymes identified within the AF-toxin clusters have still to be determined. The chain is Enoyl-CoA hydratase AFT6-1 from Alternaria alternata (Alternaria rot fungus).